The sequence spans 344 residues: Ferrochelatase (344 aa).

The Fe cation site is built by His-214 and Glu-295.

The protein belongs to the ferrochelatase family.

It localises to the cytoplasm. The enzyme catalyses heme b + 2 H(+) = protoporphyrin IX + Fe(2+). It functions in the pathway porphyrin-containing compound metabolism; protoheme biosynthesis; protoheme from protoporphyrin-IX: step 1/1. In terms of biological role, catalyzes the ferrous insertion into protoporphyrin IX. In Rhizobium etli (strain CIAT 652), this protein is Ferrochelatase.